A 234-amino-acid chain; its full sequence is Probable chemoreceptor glutamine deamidase CheD 1 (234 aa).

The disordered stretch occupies residues 183-234; the sequence is AREAAGPRGERAARARPRVELFGTPAPKAQATPRIELFGTRATQPATRKQEA. Over residues 190-201 the composition is skewed to basic and acidic residues; the sequence is RGERAARARPRV. Residues 223–234 show a composition bias toward polar residues; it reads RATQPATRKQEA.

The protein belongs to the CheD family.

It catalyses the reaction L-glutaminyl-[protein] + H2O = L-glutamyl-[protein] + NH4(+). Probably deamidates glutamine residues to glutamate on methyl-accepting chemotaxis receptors (MCPs), playing an important role in chemotaxis. The sequence is that of Probable chemoreceptor glutamine deamidase CheD 1 from Burkholderia thailandensis (strain ATCC 700388 / DSM 13276 / CCUG 48851 / CIP 106301 / E264).